We begin with the raw amino-acid sequence, 494 residues long: Solute carrier family 2, facilitated glucose transporter member 3 (494 aa).

Residues 1–10 (MGTTKVTPYL) lie on the Cytoplasmic side of the membrane. The helical transmembrane segment at 11–32 (IFATSVAAIGSFQFGYNTGVIN) threads the bilayer. Residues 33–64 (APEMIIRDFLNYTLDEKLDEPPSRLLLTNLWS) lie on the Extracellular side of the membrane. N43 is a glycosylation site (N-linked (GlcNAc...) asparagine). The helical transmembrane segment at 65–84 (LSVAIFSVGGMIGSFSVGLF) threads the bilayer. At 85 to 89 (NRFGR) the chain is on the cytoplasmic side. A helical membrane pass occupies residues 90 to 110 (RNSMLIVNLLAVIGGCLMGFC). The Extracellular portion of the chain corresponds to 111 to 117 (KISESVE). The helical transmembrane segment at 118-141 (MLILGRLVIGVFCGLCTGFVPMYI) threads the bilayer. The Cytoplasmic segment spans residues 142–152 (GEISPTALRGA). The chain crosses the membrane as a helical span at residues 153 to 173 (FGTLNQLGIVIGILVAQIFGL). Residue Q158 participates in D-glucose binding. Topologically, residues 174-182 (EIILGSEVL) are extracellular. A helical membrane pass occupies residues 183–203 (WPVLLGFTIIPAILQSAALPF). At 204 to 268 (CPESPRFLLI…LFRAPSYRQP (65 aa)) the chain is on the cytoplasmic side. Phosphothreonine is present on T231. Residues 269–289 (IIISIVLQLSQQLSGINAVFY) form a helical membrane-spanning segment. Positions 276-278 (QLS) are important for selectivity against fructose. D-glucose-binding positions include 279 to 280 (QQ) and N285. Over 290 to 303 (YSTGIFKDAGVKEP) the chain is Extracellular. A helical membrane pass occupies residues 304-324 (IYATIGAGVVNTIFTIVSVFL). N314 serves as a coordination point for D-glucose. The Cytoplasmic portion of the chain corresponds to 325 to 330 (VERAGR). Residues 331 to 351 (RTLHLIGLGGMALCSVLMTVS) traverse the membrane as a helical segment. At 352-362 (LLLKDKYDTMS) the chain is on the extracellular side. Residues 363-388 (LVCIAAILIYVAFFEIGPGPIPWFIV) form a helical membrane-spanning segment. The D-glucose site is built by E377 and W385. At 389-398 (AELFSQGPRP) the chain is on the cytoplasmic side. A helical membrane pass occupies residues 399–419 (AAMAVAGCSNWTSNFLVGLLF). The Extracellular segment spans residues 420-428 (PSAAYYLGA). Residues 429–449 (YVFVIFAVFLVAFFIFTFFKV) traverse the membrane as a helical segment. Residues 450-494 (PETRGRTFEDITRAFEGQAAEANKLGKGPTMEMNSIQPIETTTHV) lie on the Cytoplasmic side of the membrane. The residue at position 484 (S484) is a Phosphoserine. At T491 the chain carries Phosphothreonine.

This sequence belongs to the major facilitator superfamily. Sugar transporter (TC 2.A.1.1) family. Glucose transporter subfamily. As to quaternary structure, interacts with SMIM43; the interaction may promote SLC2A3-mediated glucose transport to meet the energy needs of mesendoderm differentiation. In terms of tissue distribution, detected in stomach, placenta, lung and brain.

It localises to the cell membrane. The protein resides in the perikaryon. Its subcellular location is the cell projection. It catalyses the reaction D-glucose(out) = D-glucose(in). It carries out the reaction D-galactose(in) = D-galactose(out). Deoxyglucose transport is inhibited by D-glucose, D-galactose and maltose. Galactose transport is inhibited by D-glucose and maltose. Its function is as follows. Facilitative glucose transporter. Can also mediate the uptake of various other monosaccharides across the cell membrane. Mediates the uptake of glucose, 2-deoxyglucose, galactose, mannose, xylose and fucose, and probably also dehydroascorbate. Does not mediate fructose transport. Required for mesendoderm differentiation. The polypeptide is Solute carrier family 2, facilitated glucose transporter member 3 (Oryctolagus cuniculus (Rabbit)).